We begin with the raw amino-acid sequence, 102 residues long: UPF0751 protein DSY4013 (102 aa).

It belongs to the UPF0751 family.

The polypeptide is UPF0751 protein DSY4013 (Desulfitobacterium hafniense (strain Y51)).